The chain runs to 274 residues: Putative pyruvate, phosphate dikinase regulatory protein (274 aa).

Position 151–158 (151–158) interacts with ADP; the sequence is GVSRTSKT.

It belongs to the pyruvate, phosphate/water dikinase regulatory protein family. PDRP subfamily.

It catalyses the reaction N(tele)-phospho-L-histidyl/L-threonyl-[pyruvate, phosphate dikinase] + ADP = N(tele)-phospho-L-histidyl/O-phospho-L-threonyl-[pyruvate, phosphate dikinase] + AMP + H(+). It carries out the reaction N(tele)-phospho-L-histidyl/O-phospho-L-threonyl-[pyruvate, phosphate dikinase] + phosphate + H(+) = N(tele)-phospho-L-histidyl/L-threonyl-[pyruvate, phosphate dikinase] + diphosphate. Its function is as follows. Bifunctional serine/threonine kinase and phosphorylase involved in the regulation of the pyruvate, phosphate dikinase (PPDK) by catalyzing its phosphorylation/dephosphorylation. This chain is Putative pyruvate, phosphate dikinase regulatory protein, found in Pelagibacter ubique (strain HTCC1062).